The following is a 250-amino-acid chain: DNA repair protein RecO (250 aa).

The protein belongs to the RecO family.

Functionally, involved in DNA repair and RecF pathway recombination. The protein is DNA repair protein RecO of Syntrophobacter fumaroxidans (strain DSM 10017 / MPOB).